Reading from the N-terminus, the 109-residue chain is MDLDLNNRMTEDETLEKAYDIFLELASFNLDPADILLFSLQFEIRGGAELLPPSDGWLKHVDFNPNPDFFAEVIIGLAESEDAEINDVFARILICREKSHPIYHILWKE.

Belongs to the putative dsDNA mimic protein family.

Functionally, may act as a double-stranded DNA (dsDNA) mimic. Probably regulates the activity of a dsDNA-binding protein. This is Putative double-stranded DNA mimic protein plu2488 from Photorhabdus laumondii subsp. laumondii (strain DSM 15139 / CIP 105565 / TT01) (Photorhabdus luminescens subsp. laumondii).